Reading from the N-terminus, the 277-residue chain is Putative hydro-lyase BP1875 (277 aa).

It belongs to the D-glutamate cyclase family.

The chain is Putative hydro-lyase BP1875 from Bordetella pertussis (strain Tohama I / ATCC BAA-589 / NCTC 13251).